Reading from the N-terminus, the 300-residue chain is Acetylglutamate kinase (300 aa).

Substrate is bound by residues 73–74, arginine 95, and asparagine 197; that span reads GG.

This sequence belongs to the acetylglutamate kinase family. ArgB subfamily.

Its subcellular location is the cytoplasm. It catalyses the reaction N-acetyl-L-glutamate + ATP = N-acetyl-L-glutamyl 5-phosphate + ADP. It functions in the pathway amino-acid biosynthesis; L-arginine biosynthesis; N(2)-acetyl-L-ornithine from L-glutamate: step 2/4. Catalyzes the ATP-dependent phosphorylation of N-acetyl-L-glutamate. The protein is Acetylglutamate kinase of Bordetella parapertussis (strain 12822 / ATCC BAA-587 / NCTC 13253).